A 589-amino-acid polypeptide reads, in one-letter code: Transcription factor atf-6 homolog (589 aa).

The segment covering 1–16 (MNFDNTVHESNFDDLL) has biased composition (basic and acidic residues). Residues 1 to 82 (MNFDNTVHES…SSPPLSCANF (82 aa)) are disordered. Composition is skewed to low complexity over residues 36–54 (GTDE…FSDQ) and 67–78 (GDSSSDSSPPLS). The bZIP domain occupies 250-299 (QNRKIRNRMYAQASRMRKKEADEHMKMNLQELLQENEILRTENAALKQRL). The basic motif stretch occupies residues 252 to 275 (RKIRNRMYAQASRMRKKEADEHMK). Positions 271 to 305 (DEHMKMNLQELLQENEILRTENAALKQRLAFFEHE) form a coiled coil. Residues 281–295 (LLQENEILRTENAAL) are leucine-zipper. A helical transmembrane segment spans residues 324-344 (IIAAGSVLMMFGLFAVISPFN).

The protein belongs to the bZIP family. ATF subfamily.

It is found in the nucleus. It localises to the membrane. Transcription factor. Plays a role in the unfolded protein response (UPR), perhaps mainly during constitutive endoplasmic reticulum (ER) stress, by activating transcription of genes involved in the UPR. Plays a role in modulating lifespan, acting by positively regulating expression of calcium-binding chaperone crt-1, thereby influencing ER calcium homeostasis. By activating the UPR pathway, confers adaptive protection to subsequent exposure to hypoxia. Involved in protection against proteotoxicity, probably acting via the UPR. Probably acts in the UPR in parallel with the ire-1-xbp-1 and pek-1 pathways. May be regulated by endopeptidase S2P-mediated proteolytic cleavage. In Caenorhabditis elegans, this protein is Transcription factor atf-6 homolog.